Consider the following 332-residue polypeptide: Beta-ketoacyl-[acyl-carrier-protein] synthase III (332 aa).

Active-site residues include Cys-112 and His-252. The segment at 253–257 (QANLR) is ACP-binding. The active site involves Asn-282.

This sequence belongs to the thiolase-like superfamily. FabH family. Homodimer.

It is found in the cytoplasm. The catalysed reaction is malonyl-[ACP] + acetyl-CoA + H(+) = 3-oxobutanoyl-[ACP] + CO2 + CoA. The protein operates within lipid metabolism; fatty acid biosynthesis. Functionally, catalyzes the condensation reaction of fatty acid synthesis by the addition to an acyl acceptor of two carbons from malonyl-ACP. Catalyzes the first condensation reaction which initiates fatty acid synthesis and may therefore play a role in governing the total rate of fatty acid production. Possesses both acetoacetyl-ACP synthase and acetyl transacylase activities. Its substrate specificity determines the biosynthesis of branched-chain and/or straight-chain of fatty acids. In Syntrophomonas wolfei subsp. wolfei (strain DSM 2245B / Goettingen), this protein is Beta-ketoacyl-[acyl-carrier-protein] synthase III.